The chain runs to 201 residues: UPF0376 protein F10G2.1 (201 aa).

Topologically, residues 1–3 (MKH) are cytoplasmic. Residues 4 to 24 (FLLLAIIGILFLGSTYGASVA) form a helical; Signal-anchor for type II membrane protein membrane-spanning segment. Residues 25 to 201 (TEKLKASNCT…LLECDFRNIQ (177 aa)) are Extracellular-facing. N-linked (GlcNAc...) asparagine glycans are attached at residues N32 and N124.

The protein belongs to the UPF0376 family.

The protein resides in the membrane. This Caenorhabditis elegans protein is UPF0376 protein F10G2.1.